Here is a 570-residue protein sequence, read N- to C-terminus: Double-stranded RNA-binding protein Staufen homolog 2 (570 aa).

The DRBM 1 domain occupies 8-75; that stretch reads TAMCLVNELA…ANKALTESTL (68 aa). 2 disordered regions span residues 71–94 and 181–203; these read TEST…PGSI and NEPI…DDKD. Residues 83–94 show a composition bias toward polar residues; sequence PKSNVNNNPGSI. A DRBM 2 domain is found at 95–181; that stretch reads TPTVELNGLA…AMKALQALQN (87 aa). Position 188 is a phosphoserine (serine 188). Residues 194–203 show a composition bias toward basic and acidic residues; it reads SGKDVDDDKD. 2 DRBM domains span residues 207–274 and 307–375; these read SEIS…ELKK and NPIS…QLGY. 2 short sequence motifs (nuclear localization signal) span residues 273–291 and 373–412; these read KKLP…FKKR and LGYK…PKGI. Positions 381–570 are required for dendritic transport; the sequence is LQDQLEKTGE…QDCKKSNSAV (190 aa). The segment at 387–409 is disordered; that stretch reads KTGENKGWSGPKPGFPEPTNNTP. Position 395 is a phosphoserine (serine 395). Threonine 405 carries the post-translational modification Phosphothreonine. A phosphoserine mark is found at serine 416, serine 426, serine 440, serine 455, and serine 492. The tract at residues 528–570 is disordered; the sequence is DGAMNIEKGSLEKQAKHLREKADNNQAPPGSIAQDCKKSNSAV. Residues 536-550 show a composition bias toward basic and acidic residues; it reads GSLEKQAKHLREKAD.

Interacts with the exportin XPO5. This requires RNA and RAN bound to GTP. Interacts with microtubules. Isoform 2 and isoform 3 may also interact with ribosomes, and this association is independent of translation. Identified in a mRNP complex, at least composed of DHX9, DDX3X, ELAVL1, HNRNPU, IGF2BP1, ILF3, PABPC1, PCBP2, PTBP2, STAU1, STAU2, SYNCRIP and YBX1. Interacts with TRIM71 (via NHL repeats) in an RNA-dependent manner.

The protein localises to the cytoplasm. The protein resides in the nucleus. It localises to the nucleolus. It is found in the endoplasmic reticulum. Functionally, RNA-binding protein required for the microtubule-dependent transport of neuronal RNA from the cell body to the dendrite. As protein synthesis occurs within the dendrite, the localization of specific mRNAs to dendrites may be a prerequisite for neurite outgrowth and plasticity at sites distant from the cell body. The protein is Double-stranded RNA-binding protein Staufen homolog 2 (STAU2) of Homo sapiens (Human).